The chain runs to 133 residues: Transmembrane protein 60 (133 aa).

The next 4 helical transmembrane spans lie at 5–25, 35–55, 78–98, and 110–130; these read LAQR…MLVL, WFLI…LLIV, AWYL…CAKL, and FIPL…NVFF.

The protein localises to the membrane. This Homo sapiens (Human) protein is Transmembrane protein 60 (TMEM60).